Consider the following 436-residue polypeptide: tRNA (guanine(37)-N(1))-methyltransferase 1 (436 aa).

S-adenosyl-L-methionine contacts are provided by residues histidine 229, 277–278, and asparagine 325; that span reads DL.

The protein belongs to the class I-like SAM-binding methyltransferase superfamily. TRM5/TYW2 family. As to quaternary structure, monomer.

The protein resides in the mitochondrion matrix. The protein localises to the nucleus. Its subcellular location is the cytoplasm. The enzyme catalyses guanosine(37) in tRNA + S-adenosyl-L-methionine = N(1)-methylguanosine(37) in tRNA + S-adenosyl-L-homocysteine + H(+). Functionally, specifically methylates the N1 position of guanosine-37 in various cytoplasmic and mitochondrial tRNAs. Methylation is not dependent on the nature of the nucleoside 5' of the target nucleoside. This is the first step in the biosynthesis of wybutosine (yW), a modified base adjacent to the anticodon of tRNAs and required for accurate decoding. The chain is tRNA (guanine(37)-N(1))-methyltransferase 1 from Phaeodactylum tricornutum (strain CCAP 1055/1).